A 450-amino-acid polypeptide reads, in one-letter code: tRNA-2-methylthio-N(6)-dimethylallyladenosine synthase (450 aa).

An MTTase N-terminal domain is found at 2 to 119 (KKVFVKTYGC…LPDLIARRQR (118 aa)). C11, C48, C82, C156, C160, and C163 together coordinate [4Fe-4S] cluster. Residues 142-375 (RVEGPSAFVS…QATIEENVQR (234 aa)) form the Radical SAM core domain. The region spanning 378-448 (QGMVGTVQRI…PHSLRGEIVV (71 aa)) is the TRAM domain.

It belongs to the methylthiotransferase family. MiaB subfamily. In terms of assembly, monomer. The cofactor is [4Fe-4S] cluster.

The protein resides in the cytoplasm. The enzyme catalyses N(6)-dimethylallyladenosine(37) in tRNA + (sulfur carrier)-SH + AH2 + 2 S-adenosyl-L-methionine = 2-methylsulfanyl-N(6)-dimethylallyladenosine(37) in tRNA + (sulfur carrier)-H + 5'-deoxyadenosine + L-methionine + A + S-adenosyl-L-homocysteine + 2 H(+). Its function is as follows. Catalyzes the methylthiolation of N6-(dimethylallyl)adenosine (i(6)A), leading to the formation of 2-methylthio-N6-(dimethylallyl)adenosine (ms(2)i(6)A) at position 37 in tRNAs that read codons beginning with uridine. The chain is tRNA-2-methylthio-N(6)-dimethylallyladenosine synthase from Cupriavidus taiwanensis (strain DSM 17343 / BCRC 17206 / CCUG 44338 / CIP 107171 / LMG 19424 / R1) (Ralstonia taiwanensis (strain LMG 19424)).